A 454-amino-acid polypeptide reads, in one-letter code: Phosphoglucosamine mutase (454 aa).

Residue S101 is the Phosphoserine intermediate of the active site. Mg(2+)-binding residues include S101, D243, D245, and D247. S101 is modified (phosphoserine).

Belongs to the phosphohexose mutase family. It depends on Mg(2+) as a cofactor. Post-translationally, activated by phosphorylation.

The catalysed reaction is alpha-D-glucosamine 1-phosphate = D-glucosamine 6-phosphate. In terms of biological role, catalyzes the conversion of glucosamine-6-phosphate to glucosamine-1-phosphate. The sequence is that of Phosphoglucosamine mutase from Citrifermentans bemidjiense (strain ATCC BAA-1014 / DSM 16622 / JCM 12645 / Bem) (Geobacter bemidjiensis).